A 515-amino-acid chain; its full sequence is Mucin-like protein Glc1.8b (515 aa).

Residues Met1–Ser20 form the signal peptide. Over His21–Pro467 the chain is Extracellular. Asn24, Asn45, Asn51, Asn60, Asn85, Asn93, Asn102, Asn123, Asn129, Asn138, Asn180, Asn201, Asn207, Asn216, Asn258, Asn279, Asn285, Asn294, Asn319, Asn327, Asn336, Asn357, Asn363, Asn372, Asn397, Asn405, Asn413, Asn434, and Asn441 each carry an N-linked (GlcNAc...) asparagine; by host glycan. Positions Ser80 to Leu114 are disordered. Polar residues predominate over residues Ile86–Thr104. The interval Ser314–Thr358 is disordered. Positions Ile320–Thr338 are enriched in polar residues. A disordered region spans residues Arg393–Asn413. The chain crosses the membrane as a helical span at residues Tyr468–Phe488. Residues Arg489–Glu515 are Cytoplasmic-facing.

It belongs to the polydnaviridae Glc1.8 protein family.

The protein localises to the host membrane. In terms of biological role, involved in suppression of the insect cellular immune response. Inhibits host hemocyte adhesion and phagocytosis. The chain is Mucin-like protein Glc1.8b (O16) from Microplitis demolitor (Parasitoid wasp).